The primary structure comprises 239 residues: 1-(5-phosphoribosyl)-5-[(5-phosphoribosylamino)methylideneamino] imidazole-4-carboxamide isomerase (239 aa).

Catalysis depends on aspartate 8, which acts as the Proton acceptor. The active-site Proton donor is the aspartate 129.

Belongs to the HisA/HisF family.

The protein resides in the cytoplasm. It catalyses the reaction 1-(5-phospho-beta-D-ribosyl)-5-[(5-phospho-beta-D-ribosylamino)methylideneamino]imidazole-4-carboxamide = 5-[(5-phospho-1-deoxy-D-ribulos-1-ylimino)methylamino]-1-(5-phospho-beta-D-ribosyl)imidazole-4-carboxamide. The protein operates within amino-acid biosynthesis; L-histidine biosynthesis; L-histidine from 5-phospho-alpha-D-ribose 1-diphosphate: step 4/9. This chain is 1-(5-phosphoribosyl)-5-[(5-phosphoribosylamino)methylideneamino] imidazole-4-carboxamide isomerase, found in Bacillus cereus (strain ATCC 10987 / NRS 248).